The sequence spans 265 residues: Glutamate racemase (265 aa).

Substrate-binding positions include 12 to 13 (DS) and 44 to 45 (YG). Cysteine 75 serves as the catalytic Proton donor/acceptor. Position 76–77 (76–77 (NT)) interacts with substrate. The active-site Proton donor/acceptor is cysteine 186. Residue 187–188 (TH) coordinates substrate.

It belongs to the aspartate/glutamate racemases family.

The catalysed reaction is L-glutamate = D-glutamate. Its pathway is cell wall biogenesis; peptidoglycan biosynthesis. Its function is as follows. Provides the (R)-glutamate required for cell wall biosynthesis. The sequence is that of Glutamate racemase from Pseudomonas aeruginosa (strain ATCC 15692 / DSM 22644 / CIP 104116 / JCM 14847 / LMG 12228 / 1C / PRS 101 / PAO1).